The following is a 220-amino-acid chain: Tumor protein p53-inducible nuclear protein 2 (220 aa).

The segment covering 1-12 has biased composition (low complexity); that stretch reads MFQRLSSLFFST. 3 disordered regions span residues 1-24, 41-69, and 119-220; these read MFQR…CPRA, PDSY…LMDE, and PGSP…QFNY. Serine 14 carries the post-translational modification Phosphoserine. The LIR signature appears at 26–41; sequence VSEEDEVDGWLIIDLP. Over residues 47–64 the composition is skewed to pro residues; sequence PPSPGAAPAPAGRPPPAP. Residue serine 136 is modified to Phosphoserine. Residues 152 to 170 are compositionally biased toward low complexity; it reads HAAPLPARAALLEKAGQVR. The segment covering 205 to 220 has biased composition (polar residues); sequence NQSSFIYQPCQRQFNY.

As to quaternary structure, interacts with VMP1, GABARAP, GABARAPL1, GABARAPL2, MAP1LC3A, MAP1LC3B, MAP1LC3C and THRA.

It is found in the cytoplasm. Its subcellular location is the cytosol. It localises to the nucleus. The protein localises to the PML body. The protein resides in the cytoplasmic vesicle. It is found in the autophagosome. Its function is as follows. Dual regulator of transcription and autophagy. Positively regulates autophagy and is required for autophagosome formation and processing. May act as a scaffold protein that recruits MAP1LC3A, GABARAP and GABARAPL2 and brings them to the autophagosome membrane by interacting with VMP1 where, in cooperation with the BECN1-PI3-kinase class III complex, they trigger autophagosome development. Acts as a transcriptional activator of THRA. This is Tumor protein p53-inducible nuclear protein 2 (TP53INP2) from Homo sapiens (Human).